Reading from the N-terminus, the 273-residue chain is NAD kinase (273 aa).

Asp-53 functions as the Proton acceptor in the catalytic mechanism. NAD(+) is bound by residues 53–54 (DG), Arg-58, 128–129 (NE), Asp-157, 168–173 (TAYNFS), and Ala-192.

It belongs to the NAD kinase family. Requires a divalent metal cation as cofactor.

The protein localises to the cytoplasm. The catalysed reaction is NAD(+) + ATP = ADP + NADP(+) + H(+). Involved in the regulation of the intracellular balance of NAD and NADP, and is a key enzyme in the biosynthesis of NADP. Catalyzes specifically the phosphorylation on 2'-hydroxyl of the adenosine moiety of NAD to yield NADP. This is NAD kinase from Finegoldia magna (strain ATCC 29328 / DSM 20472 / WAL 2508) (Peptostreptococcus magnus).